The chain runs to 109 residues: Nucleoid-associated protein Asuc_0997 (109 aa).

The interval 1 to 23 (MFGKGGLGGLMKQAQQMQERMQK) is disordered.

It belongs to the YbaB/EbfC family. In terms of assembly, homodimer.

It localises to the cytoplasm. The protein resides in the nucleoid. Functionally, binds to DNA and alters its conformation. May be involved in regulation of gene expression, nucleoid organization and DNA protection. This is Nucleoid-associated protein Asuc_0997 from Actinobacillus succinogenes (strain ATCC 55618 / DSM 22257 / CCUG 43843 / 130Z).